A 137-amino-acid polypeptide reads, in one-letter code: Thioredoxin-like protein R548 (137 aa).

The 136-residue stretch at Ser2–Gln137 folds into the Thioredoxin domain. Catalysis depends on nucleophile residues Cys61 and Cys64. An intrachain disulfide couples Cys61 to Cys64.

This sequence belongs to the thioredoxin family.

Functionally, participates in various redox reactions through the reversible oxidation of its active center dithiol to a disulfide and catalyzes dithiol-disulfide exchange reactions. This Acanthamoeba polyphaga mimivirus (APMV) protein is Thioredoxin-like protein R548.